The chain runs to 239 residues: Ribose-5-phosphate isomerase A (239 aa).

Substrate is bound by residues 31–34, 88–91, and 101–104; these read FGST, DGAD, and KGGG. The Proton acceptor role is filled by glutamate 110. Residue lysine 128 coordinates substrate.

The protein belongs to the ribose 5-phosphate isomerase family. Homodimer.

The enzyme catalyses aldehydo-D-ribose 5-phosphate = D-ribulose 5-phosphate. It functions in the pathway carbohydrate degradation; pentose phosphate pathway; D-ribose 5-phosphate from D-ribulose 5-phosphate (non-oxidative stage): step 1/1. Its function is as follows. Catalyzes the reversible conversion of ribose-5-phosphate to ribulose 5-phosphate. The protein is Ribose-5-phosphate isomerase A of Chloroflexus aurantiacus (strain ATCC 29366 / DSM 635 / J-10-fl).